A 517-amino-acid polypeptide reads, in one-letter code: ATP synthase subunit alpha (517 aa).

Position 174–181 (174–181 (GDRQTGKT)) interacts with ATP.

It belongs to the ATPase alpha/beta chains family. As to quaternary structure, F-type ATPases have 2 components, CF(1) - the catalytic core - and CF(0) - the membrane proton channel. CF(1) has five subunits: alpha(3), beta(3), gamma(1), delta(1), epsilon(1). CF(0) has three main subunits: a(1), b(2) and c(9-12). The alpha and beta chains form an alternating ring which encloses part of the gamma chain. CF(1) is attached to CF(0) by a central stalk formed by the gamma and epsilon chains, while a peripheral stalk is formed by the delta and b chains.

The protein localises to the cell inner membrane. The catalysed reaction is ATP + H2O + 4 H(+)(in) = ADP + phosphate + 5 H(+)(out). In terms of biological role, produces ATP from ADP in the presence of a proton gradient across the membrane. The alpha chain is a regulatory subunit. This chain is ATP synthase subunit alpha, found in Polaromonas sp. (strain JS666 / ATCC BAA-500).